A 1254-amino-acid chain; its full sequence is AF4/FMR2 family member 3 (1254 aa).

The segment covering 45–62 (YEPDRNALRRKERERRSQ) has biased composition (basic and acidic residues). Disordered stretches follow at residues 45-90 (YEPD…GDEL), 139-190 (AESR…AAQQ), 261-324 (RPMD…GENN), 350-534 (EPSK…EGQD), and 552-752 (KTTC…SVGS). Composition is skewed to polar residues over residues 67 to 76 (DSGSFNSGYS) and 143 to 158 (AQPQ…SSTP). Over residues 359–369 (KDSQLVSSGHS) the composition is skewed to polar residues. Over residues 406–418 (QQAAQRTALRALA) the composition is skewed to low complexity. A compositionally biased stretch (polar residues) spans 421 to 433 (SVVQQTNCRGSAP). Residues 441-472 (SSSSGGSSSSSDSESTSGSDSETESSSSSSES) show a composition bias toward low complexity. Residues 552–561 (KTTCKEEQRP) are compositionally biased toward basic and acidic residues. Over residues 577 to 605 (SPPAAVAVTAAALPPAVPSAPTESAPAPT) the composition is skewed to low complexity. Residues 615 to 633 (RRTERTSAGDGANCHRPEE) show a composition bias toward basic and acidic residues. 2 stretches are compositionally biased toward low complexity: residues 694–704 (TESSSSSSSSD) and 732–749 (AASS…SRAS). Ser-782 carries the phosphoserine modification. Residues 813–883 (PGVLSAPSAK…ASTNNTLSGN (71 aa)) form a disordered region. The segment covering 857-869 (REIKKVQGRKESA) has biased composition (basic and acidic residues). Polar residues predominate over residues 873–883 (AASTNNTLSGN). Ser-908 bears the Phosphoserine mark. 2 disordered regions span residues 919-991 (ASED…HRDC) and 1128-1171 (AAQA…SGLS). Composition is skewed to polar residues over residues 922 to 941 (DLTS…ASSN) and 960 to 985 (ASHN…SPGS). Low complexity-rich tracts occupy residues 1132–1146 (PSPW…GSPS) and 1154–1171 (PASS…SGLS).

Belongs to the AF4 family. In terms of tissue distribution, highest levels found in lymphoid tissues, lower levels in brain and lung.

It localises to the nucleus. In terms of biological role, putative transcription activator that may function in lymphoid development and oncogenesis. In Mus musculus (Mouse), this protein is AF4/FMR2 family member 3 (Aff3).